Consider the following 95-residue polypeptide: Integration host factor subunit beta (95 aa).

This sequence belongs to the bacterial histone-like protein family. In terms of assembly, heterodimer of an alpha and a beta chain.

In terms of biological role, this protein is one of the two subunits of integration host factor, a specific DNA-binding protein that functions in genetic recombination as well as in transcriptional and translational control. This Shewanella pealeana (strain ATCC 700345 / ANG-SQ1) protein is Integration host factor subunit beta.